The following is a 570-amino-acid chain: Urease subunit alpha (570 aa).

The 440-residue stretch at 131 to 570 folds into the Urease domain; it reads GGMDSHIHFI…LPMAQRYFLF (440 aa). 3 residues coordinate Ni(2+): histidine 136, histidine 138, and lysine 219. Lysine 219 carries the N6-carboxylysine modification. Histidine 221 contributes to the substrate binding site. Residues histidine 248 and histidine 274 each contribute to the Ni(2+) site. The active-site Proton donor is the histidine 322. Aspartate 362 is a Ni(2+) binding site.

It belongs to the metallo-dependent hydrolases superfamily. Urease alpha subunit family. Heterotrimer of UreA (gamma), UreB (beta) and UreC (alpha) subunits. Three heterotrimers associate to form the active enzyme. Requires Ni cation as cofactor. Post-translationally, carboxylation allows a single lysine to coordinate two nickel ions.

Its subcellular location is the cytoplasm. It carries out the reaction urea + 2 H2O + H(+) = hydrogencarbonate + 2 NH4(+). Its pathway is nitrogen metabolism; urea degradation; CO(2) and NH(3) from urea (urease route): step 1/1. This is Urease subunit alpha from Rhizobium meliloti (strain 1021) (Ensifer meliloti).